We begin with the raw amino-acid sequence, 334 residues long: Phosphate acyltransferase (334 aa).

Belongs to the PlsX family. As to quaternary structure, homodimer. Probably interacts with PlsY.

The protein resides in the cytoplasm. The enzyme catalyses a fatty acyl-[ACP] + phosphate = an acyl phosphate + holo-[ACP]. It participates in lipid metabolism; phospholipid metabolism. Its function is as follows. Catalyzes the reversible formation of acyl-phosphate (acyl-PO(4)) from acyl-[acyl-carrier-protein] (acyl-ACP). This enzyme utilizes acyl-ACP as fatty acyl donor, but not acyl-CoA. The protein is Phosphate acyltransferase of Acholeplasma laidlawii (strain PG-8A).